A 502-amino-acid chain; its full sequence is Tyrosine-protein kinase receptor old-1 (502 aa).

Positions 1–19 (MKGTLIFVVFYSSYGFAHC) are cleaved as a signal peptide. Over 20-58 (NTILRSSSLSRNFEDSLRRIPRSTDKDETGFEDSNVQEV) the chain is Extracellular. A helical membrane pass occupies residues 59 to 79 (IFILLYCLFVALAILICGLII). Topologically, residues 80-502 (FYNSRKRELR…WLSDEKHCDS (423 aa)) are cytoplasmic. A disordered region spans residues 99–140 (LLEPTSADHKRRNSSNIVPPEPTPYPITSGESDLRQTPSRLS). Residues 127–140 (SGESDLRQTPSRLS) are compositionally biased toward polar residues. The 299-residue stretch at 175 to 473 (ISKGRPLGSG…ELKTTSNEYF (299 aa)) folds into the Protein kinase domain. Residues 181–189 (LGSGEFGII) and Lys213 contribute to the ATP site. The Proton acceptor role is filled by Asp321.

It belongs to the protein kinase superfamily. Tyr protein kinase family.

It is found in the cell membrane. The catalysed reaction is L-tyrosyl-[protein] + ATP = O-phospho-L-tyrosyl-[protein] + ADP + H(+). Receptor tyrosine kinase which plays a role in promoting longevity and resistance to stresses including UV irradiation and high temperatures, probably downstream of daf-16. This chain is Tyrosine-protein kinase receptor old-1, found in Caenorhabditis elegans.